The sequence spans 513 residues: Alpha-amylase mde5 (513 aa).

Residues 1-25 (MKHNEVFGWTLKVLSFLLVVIPANA) form the signal peptide. A disulfide bridge links cysteine 52 with cysteine 60. Substrate is bound at residue tryptophan 105. Asparagine 143 serves as a coordination point for Ca(2+). Position 144 (histidine 144) interacts with substrate. An N-linked (GlcNAc...) asparagine glycan is attached at asparagine 162. An intrachain disulfide couples cysteine 171 to cysteine 184. Residues glutamate 182 and aspartate 195 each coordinate Ca(2+). Arginine 224 contributes to the substrate binding site. Ca(2+) contacts are provided by aspartate 226, histidine 230, and glutamate 250. The Nucleophile role is filled by aspartate 226. 229 to 230 (KH) is a binding site for substrate. The active-site Proton donor is the glutamate 250. Glycine 254 is a binding site for substrate. The cysteines at positions 260 and 304 are disulfide-linked. Substrate is bound at residue aspartate 318. The N-linked (GlcNAc...) asparagine glycan is linked to asparagine 357. Arginine 365 provides a ligand contact to substrate. An intrachain disulfide couples cysteine 454 to cysteine 488.

The protein belongs to the glycosyl hydrolase 13 family. Ca(2+) serves as cofactor.

It is found in the endoplasmic reticulum. The catalysed reaction is Endohydrolysis of (1-&gt;4)-alpha-D-glucosidic linkages in polysaccharides containing three or more (1-&gt;4)-alpha-linked D-glucose units.. This is Alpha-amylase mde5 (mde5) from Schizosaccharomyces pombe (strain 972 / ATCC 24843) (Fission yeast).